The following is a 66-amino-acid chain: U10-theraphotoxin-Cg1a 1 (66 aa).

Positions 1–21 are cleaved as a signal peptide; that stretch reads MKTSVLFVIFGLALLFCLSFA. Positions 22-29 are excised as a propeptide; the sequence is AELEDTGR. 3 disulfide bridges follow: C31–C46, C38–C51, and C45–C58.

The protein belongs to the neurotoxin 10 (Hwtx-1) family. 29 (Jztx-13) subfamily. Expressed by the venom gland.

It is found in the secreted. Probable ion channel inhibitor. The protein is U10-theraphotoxin-Cg1a 1 of Chilobrachys guangxiensis (Chinese earth tiger tarantula).